A 600-amino-acid chain; its full sequence is UvrABC system protein C (600 aa).

One can recognise a GIY-YIG domain in the interval 15-100 (NSTGVYQYFN…IKQLHPKYNI (86 aa)). The UVR domain occupies 203 to 238 (SVLLKNLEKQMLVLAQNENYEEAAKVRDQIAMIKDL).

Belongs to the UvrC family. Interacts with UvrB in an incision complex.

It is found in the cytoplasm. The UvrABC repair system catalyzes the recognition and processing of DNA lesions. UvrC both incises the 5' and 3' sides of the lesion. The N-terminal half is responsible for the 3' incision and the C-terminal half is responsible for the 5' incision. This chain is UvrABC system protein C, found in Campylobacter jejuni subsp. jejuni serotype O:2 (strain ATCC 700819 / NCTC 11168).